Reading from the N-terminus, the 546-residue chain is CTP synthase (546 aa).

The interval 1 to 266 is amidoligase domain; the sequence is MAKYYIFITG…DSYVCDRFCI (266 aa). CTP is bound at residue S14. S14 is a binding site for UTP. ATP contacts are provided by residues 15–20 and D72; that span reads SLGKGI. Residues D72 and E140 each contribute to the Mg(2+) site. CTP contacts are provided by residues 147 to 149, 187 to 192, and K223; these read DIE and KTKPTQ. Residues 187 to 192 and K223 contribute to the UTP site; that span reads KTKPTQ. One can recognise a Glutamine amidotransferase type-1 domain in the interval 291–544; the sequence is NIGIIGKYTE…VKAAFDFKNK (254 aa). G352 serves as a coordination point for L-glutamine. Residue C379 is the Nucleophile; for glutamine hydrolysis of the active site. L-glutamine is bound by residues 380–383, E403, and R470; that span reads LGMQ. Residues H517 and E519 contribute to the active site.

Belongs to the CTP synthase family. Homotetramer.

The catalysed reaction is UTP + L-glutamine + ATP + H2O = CTP + L-glutamate + ADP + phosphate + 2 H(+). The enzyme catalyses L-glutamine + H2O = L-glutamate + NH4(+). It catalyses the reaction UTP + NH4(+) + ATP = CTP + ADP + phosphate + 2 H(+). It functions in the pathway pyrimidine metabolism; CTP biosynthesis via de novo pathway; CTP from UDP: step 2/2. Its activity is regulated as follows. Allosterically activated by GTP, when glutamine is the substrate; GTP has no effect on the reaction when ammonia is the substrate. The allosteric effector GTP functions by stabilizing the protein conformation that binds the tetrahedral intermediate(s) formed during glutamine hydrolysis. Inhibited by the product CTP, via allosteric rather than competitive inhibition. Functionally, catalyzes the ATP-dependent amination of UTP to CTP with either L-glutamine or ammonia as the source of nitrogen. Regulates intracellular CTP levels through interactions with the four ribonucleotide triphosphates. The chain is CTP synthase from Wigglesworthia glossinidia brevipalpis.